Here is a 245-residue protein sequence, read N- to C-terminus: Orotidine 5'-phosphate decarboxylase (245 aa).

Substrate-binding positions include D22, K44, 71–80 (DLKFHDIPNT), T131, R192, Q201, G221, and R222. Catalysis depends on K73, which acts as the Proton donor.

The protein belongs to the OMP decarboxylase family. Type 1 subfamily. In terms of assembly, homodimer.

It catalyses the reaction orotidine 5'-phosphate + H(+) = UMP + CO2. Its pathway is pyrimidine metabolism; UMP biosynthesis via de novo pathway; UMP from orotate: step 2/2. Functionally, catalyzes the decarboxylation of orotidine 5'-monophosphate (OMP) to uridine 5'-monophosphate (UMP). This is Orotidine 5'-phosphate decarboxylase from Escherichia fergusonii (strain ATCC 35469 / DSM 13698 / CCUG 18766 / IAM 14443 / JCM 21226 / LMG 7866 / NBRC 102419 / NCTC 12128 / CDC 0568-73).